The following is a 349-amino-acid chain: MDLTRQGWLHGQPTASGVLKSTPEDFVVIEDLGYSPDGDGEQLLVRVRKQGCNTRFVAEALAKFAGIPARDVSFAGMKDRHAVTEQWFCLRLPGKVTPDLNAFQLEGVEVLESARHRRKLRIGALQGNAFTLVLRQVSDRDAVEQRLQLITAVGVPNYFGSQRFGHDGNNLKLAQRWAADEIRVRERSKRSFILSAARSAMFNQVVSDRLAQQGSLCRVLAGDALQLTGRGSWFVAETAEMDSLQQRVDNNELRITAPLPGSGEWGTRDDALSFEQQSLAHEGALIALMERERVDAARRAMLVIPRELRWRWADDATLEMSFWLPAGSFATSVVRELIVTQSSSNEADE.

F26 provides a ligand contact to substrate. D79 serves as the catalytic Nucleophile. A substrate-binding site is contributed by N128. Residues 154–303 (GVPNYFGSQR…VDAARRAMLV (150 aa)) enclose the TRUD domain. A substrate-binding site is contributed by F329.

It belongs to the pseudouridine synthase TruD family.

The catalysed reaction is uridine(13) in tRNA = pseudouridine(13) in tRNA. Its function is as follows. Responsible for synthesis of pseudouridine from uracil-13 in transfer RNAs. In Erwinia tasmaniensis (strain DSM 17950 / CFBP 7177 / CIP 109463 / NCPPB 4357 / Et1/99), this protein is tRNA pseudouridine synthase D.